Consider the following 154-residue polypeptide: Egg-lysin (154 aa).

The first 18 residues, 1–18, serve as a signal peptide directing secretion; it reads MKLLVLWVFAMMATVAMS.

As to quaternary structure, monomer. Homodimer. Molecules associate into dimers and then rapidly dissociate again. Interacts (as a monomer) with the egg vitelline layer protein VERL (via VERL repeats); each VERL chain can bind multiple copies of lysin. In terms of tissue distribution, sperm.

It is found in the cytoplasmic vesicle. It localises to the secretory vesicle. Its subcellular location is the acrosome lumen. Functionally, creates a 3 um hole in the egg vitelline layer through which the sperm passes. Does not have enzyme activity. Species-specific interaction between the sperm protein lysin and the egg protein VERL exposes a basic surface on lysin that may dissociate the egg vitelline layer via electrostatic repulsion. Plays a role in ensuring species-specific fertilization. The chain is Egg-lysin from Haliotis fulgens (Green abalone).